Here is a 565-residue protein sequence, read N- to C-terminus: uncharacterized protein (565 aa).

The signal sequence occupies residues 1–19; that stretch reads MRWLATFVALLIAISSVSA. Positions 494–504 are enriched in polar residues; that stretch reads TGAENVTNNSV. The disordered stretch occupies residues 494–525; the sequence is TGAENVTNNSVTATTPPAKASQQTPAPATPPV. The span at 505-519 shows a compositional bias: low complexity; sequence TATTPPAKASQQTPA.

This is an uncharacterized protein from Archaeoglobus fulgidus (strain ATCC 49558 / DSM 4304 / JCM 9628 / NBRC 100126 / VC-16).